The following is an 831-amino-acid chain: MGKTQKKNSKGRLDRYYYLAKEKGYRARSSFKIIQINEKYGHFLEKSKVVIDLCAAPGSWCQVASQLCPINSLIIGVDIVPIKALPNCITFQSDITTEDCRSQLRGHMKTWKADTVLHDGAPNVGLGWVQDAFTQSHLTLQALKLAVENLNTGGTFVTKIFRSRDYNNLMWVFQQLFEKVEATKPPASRNVSAEIFVVCKGYKSPKKMDPRLLDPREVFEELPTGPDNNEAKIFNPEKKVRRRQGYEEGDYTLFHEMPLLEFIKNEDPINTLGTLNKLSEPPQDDHEWKILKKSKLCTPELLECIKDLKVLGRKDFKHLLKFRKQARDLLGLDAKEETQEIEVEPLTEDQQIEKELQELTEKQKQKARKAKKQSNEIKQKEIQRSQMNMLTDMNIGIEAAQIGAESLFNLKTAIKTGQLEKLSKGKKKMIFNDEEIMKDNDINFDEEADANSEDEIDELEAQLDDMYNSYQNRRAERDANYRAKKLRGDVDDEGWEGIESDKEGSDKETEANDYEMESESDSDDDEHIQRIADQRKKELSKNAKVFFASNSIFGELGDEALLEEMNKKEAKTNQVTNENAVGHANDISNKPEQMEVDSSDSENDVSDDSDFEIVPNAPDEELSDSDSDNENDVSRKYSKAKDQQSKVDIATVEAMTLAHQVALGHKNKHDLVNEGIHKYSFRDHDDLPEWFVDDEKRNSKIVKPITKEAALAIKEKQKQLNARPIKKVLEAQGRKKLRALKRLEKLKKKSDMINEDSAKSERDKADEIQKLMKKLTKKQKTKPKATLVVARGSNRGLSGRPKGVKGKYKMVDGVMKNEQRALKRIAKKHKK.

Residues G58, W60, D78, D94, and D119 each coordinate S-adenosyl-L-methionine. The active-site Proton acceptor is the K159. 2 coiled-coil regions span residues 346–389 (LTED…QMNM) and 440–479 (NDIN…ERDA). Disordered stretches follow at residues 492–535 (DEGW…ADQR) and 565–645 (MNKK…DQQS). The segment covering 499 to 510 (ESDKEGSDKETE) has biased composition (basic and acidic residues). Composition is skewed to acidic residues over residues 511–526 (ANDY…DDDE), 594–611 (MEVD…DSDF), and 618–631 (PDEE…DNEN). Residues 632–645 (DVSRKYSKAKDQQS) show a composition bias toward basic and acidic residues. Positions 729–782 (LEAQGRKKLRALKRLEKLKKKSDMINEDSAKSERDKADEIQKLMKKLTKKQKTK) form a coiled coil.

The protein belongs to the class I-like SAM-binding methyltransferase superfamily. RNA methyltransferase RlmE family. SPB1 subfamily. As to quaternary structure, component of the nucleolar and nucleoplasmic pre-60S ribosomal particle.

The protein resides in the nucleus. It localises to the nucleolus. It carries out the reaction a ribonucleotide in rRNA + S-adenosyl-L-methionine = a 2'-O-methylribonucleotide in rRNA + S-adenosyl-L-homocysteine + H(+). Required for proper assembly of pre-ribosomal particles during the biogenesis of the 60S ribosomal subunit. This chain is AdoMet-dependent rRNA methyltransferase SPB1, found in Debaryomyces hansenii (strain ATCC 36239 / CBS 767 / BCRC 21394 / JCM 1990 / NBRC 0083 / IGC 2968) (Yeast).